The chain runs to 357 residues: MNRETFDIQPIGRFYGSNTAIRRPREIACFSYDDQHKFHLGDSSLRYYYPPQLPADLNRGFDTFQKLDDAADEHIDALLDTIAAMEKETGKRCEADIITWRGMMTKILTAPFDDMNGFEMNATCFQGTMCKQLQRQQRMPPGMASQDLMAYWGYKFETISVLDKTWDEASREEIEGRENLVVNNNAQYCSVVRTGIGRTKLVLGGEVDAIWDSKPERKEDPINWVELKTSAEIRKDWDMVKFERKLLKFWAQSFLLGVPKIVVGFRDQGGILRRLEELETANIPNRVRKSGRGTWDGNICINFAATFLEWLKSVIKEGGTWRLRKAEKSSVIEVYQVEESGTGDILSQAFLSWRSTT.

Glu-157 contacts a divalent metal cation. Substrate-binding residues include Cys-189 and Glu-206. The a divalent metal cation site is built by Asp-208, Glu-226, and Leu-227. Substrate contacts are provided by Lys-228 and Gln-252.

The protein belongs to the DXO/Dom3Z family. As to quaternary structure, interacts with rat1; the interaction is direct, stabilizes rat1 protein structure and stimulates its exoribonuclease activity. The interaction also stimulates rai1 pyrophosphohydrolase activity, probably by recruiting it to mRNA substrates. A divalent metal cation is required as a cofactor.

The protein resides in the nucleus. The enzyme catalyses a 5'-end NAD(+)-phospho-ribonucleoside in mRNA + H2O = a 5'-end phospho-ribonucleoside in mRNA + NAD(+) + H(+). The catalysed reaction is a 5'-end (N(7)-methyl 5'-triphosphoguanosine)-ribonucleoside-ribonucleotide in mRNA + H2O = a (N(7)-methyl 5'-triphosphoguanosine)-nucleoside + a 5'-end phospho-ribonucleoside in mRNA + H(+). It catalyses the reaction a 5'-end triphospho-ribonucleoside in mRNA + H2O = a 5'-end phospho-ribonucleoside in mRNA + diphosphate + H(+). In terms of biological role, decapping enzyme for NAD-capped RNAs: specifically hydrolyzes the nicotinamide adenine dinucleotide (NAD) cap from a subset of RNAs by removing the entire NAD moiety from the 5'-end of an NAD-capped RNA. The NAD-cap is present at the 5'-end of some RNAs and snoRNAs. In contrast to the canonical 5'-end N7 methylguanosine (m7G) cap, the NAD cap promotes mRNA decay. Also acts as a non-canonical decapping enzyme that removes the entire cap structure of m7G capped or incompletely capped RNAs. Has decapping activity toward incomplete 5'-end m7G cap mRNAs such as unmethylated 5'-end-capped RNA (cap0), while it has no activity toward 2'-O-ribose methylated m7G cap (cap1). Also possesses RNA 5'-pyrophosphohydrolase activity by hydrolyzing the 5'-end triphosphate to release pyrophosphates. Stimulates exoribonuclease activity of Rat1, allowing it to degrade RNAs with stable secondary structure more effectively. The protein is Decapping nuclease RAI1 (rai1) of Emericella nidulans (strain FGSC A4 / ATCC 38163 / CBS 112.46 / NRRL 194 / M139) (Aspergillus nidulans).